The sequence spans 338 residues: Ketol-acid reductoisomerase (NADP(+)) (338 aa).

A KARI N-terminal Rossmann domain is found at 1–181; sequence MNVYYDKDCD…GGGRSGIIET (181 aa). NADP(+) contacts are provided by residues 24–27, R47, S50, S52, and 82–85; these read YGSQ and DEFQ. H107 is a catalytic residue. Residue G133 participates in NADP(+) binding. A KARI C-terminal knotted domain is found at 182–327; sequence TFKDETETDL…AKLRGMMPWI (146 aa). Residues D190, E194, E226, and E230 each coordinate Mg(2+). Residue S251 participates in substrate binding.

It belongs to the ketol-acid reductoisomerase family. Mg(2+) is required as a cofactor.

The catalysed reaction is (2R)-2,3-dihydroxy-3-methylbutanoate + NADP(+) = (2S)-2-acetolactate + NADPH + H(+). It catalyses the reaction (2R,3R)-2,3-dihydroxy-3-methylpentanoate + NADP(+) = (S)-2-ethyl-2-hydroxy-3-oxobutanoate + NADPH + H(+). It functions in the pathway amino-acid biosynthesis; L-isoleucine biosynthesis; L-isoleucine from 2-oxobutanoate: step 2/4. The protein operates within amino-acid biosynthesis; L-valine biosynthesis; L-valine from pyruvate: step 2/4. In terms of biological role, involved in the biosynthesis of branched-chain amino acids (BCAA). Catalyzes an alkyl-migration followed by a ketol-acid reduction of (S)-2-acetolactate (S2AL) to yield (R)-2,3-dihydroxy-isovalerate. In the isomerase reaction, S2AL is rearranged via a Mg-dependent methyl migration to produce 3-hydroxy-3-methyl-2-ketobutyrate (HMKB). In the reductase reaction, this 2-ketoacid undergoes a metal-dependent reduction by NADPH to yield (R)-2,3-dihydroxy-isovalerate. The sequence is that of Ketol-acid reductoisomerase (NADP(+)) from Psychrobacter arcticus (strain DSM 17307 / VKM B-2377 / 273-4).